Consider the following 154-residue polypeptide: Ribosome maturation factor RimP (154 aa).

Belongs to the RimP family.

It is found in the cytoplasm. Required for maturation of 30S ribosomal subunits. The chain is Ribosome maturation factor RimP from Thioalkalivibrio sulfidiphilus (strain HL-EbGR7).